Reading from the N-terminus, the 414-residue chain is Transcription factor FAMA (414 aa).

Disordered stretches follow at residues 1–61 (MDKD…TPFD) and 142–197 (KEDQ…SQRM). Composition is skewed to low complexity over residues 12-24 (GESSGGNDDNSSG) and 35-49 (QQQQKQSMPQQQQHQ). Over residues 166 to 175 (RENKNVTKKE) the composition is skewed to basic and acidic residues. A compositionally biased stretch (basic residues) spans 176 to 185 (VKSKRKRART). Over residues 187-197 (KTSEEVESQRM) the composition is skewed to basic and acidic residues. Residues 194–245 (SQRMTHIAVERNRRKQMNEHLRVLRSLMPGSYVQRGDQASIIGGAIEFVREL) form the bHLH domain. Positions 249–253 (LQCLE) match the LxCxE motif motif.

Interacts with FAMA through its LxCxE motif. Self-interacts. Also interacts with bHLH071 and bHLH093. Interacts with RBR1. Resctricted to stomatal cell lineages (at protein level). Expressed in roots, leaves, stems, and flowers.

It is found in the nucleus. Its function is as follows. Transcription activator. Together with MYB88 and MYB124, ensures that stomata contain just two guard cells (GCs) by enforcing a single symmetric precursor cell division before stomatal maturity. Together with SPCH and MUTE, regulates the stomata formation. Required to promote differentiation and morphogenesis of stomatal guard cells and to halt proliferative divisions in their immediate precursors. Mediates the formation of stomata. Prevents histone H3K27me3 marks and derepresses stem cell gene expression. This is Transcription factor FAMA (FAMA) from Arabidopsis thaliana (Mouse-ear cress).